A 184-amino-acid polypeptide reads, in one-letter code: NADH-quinone oxidoreductase subunit B (184 aa).

[4Fe-4S] cluster contacts are provided by C37, C38, C103, and C132.

Belongs to the complex I 20 kDa subunit family. In terms of assembly, NDH-1 is composed of 14 different subunits. Subunits NuoB, C, D, E, F, and G constitute the peripheral sector of the complex. [4Fe-4S] cluster serves as cofactor.

The protein resides in the cell membrane. The catalysed reaction is a quinone + NADH + 5 H(+)(in) = a quinol + NAD(+) + 4 H(+)(out). In terms of biological role, NDH-1 shuttles electrons from NADH, via FMN and iron-sulfur (Fe-S) centers, to quinones in the respiratory chain. The immediate electron acceptor for the enzyme in this species is believed to be a menaquinone. Couples the redox reaction to proton translocation (for every two electrons transferred, four hydrogen ions are translocated across the cytoplasmic membrane), and thus conserves the redox energy in a proton gradient. In Mycobacterium bovis (strain BCG / Pasteur 1173P2), this protein is NADH-quinone oxidoreductase subunit B.